The primary structure comprises 178 residues: Small ribosomal subunit protein uS4 (178 aa).

The region spanning 104 to 166 is the S4 RNA-binding domain; it reads RRLQTIVYRK…PNSPMASENH (63 aa). The disordered stretch occupies residues 158-178; the sequence is NSPMASENHPERTAAVSEENQ.

It belongs to the universal ribosomal protein uS4 family. As to quaternary structure, part of the 30S ribosomal subunit. Contacts protein S5. The interaction surface between S4 and S5 is involved in control of translational fidelity.

Functionally, one of the primary rRNA binding proteins, it binds directly to 16S rRNA where it nucleates assembly of the body of the 30S subunit. Its function is as follows. With S5 and S12 plays an important role in translational accuracy. The chain is Small ribosomal subunit protein uS4 from Methanococcus maripaludis (strain C5 / ATCC BAA-1333).